A 339-amino-acid chain; its full sequence is DNA-directed RNA polymerase subunit alpha (339 aa).

The alpha N-terminal domain (alpha-NTD) stretch occupies residues Met-1 to Glu-233. The tract at residues Ile-267 to Phe-339 is alpha C-terminal domain (alpha-CTD).

Belongs to the RNA polymerase alpha chain family. In plastids the minimal PEP RNA polymerase catalytic core is composed of four subunits: alpha, beta, beta', and beta''. When a (nuclear-encoded) sigma factor is associated with the core the holoenzyme is formed, which can initiate transcription.

It is found in the plastid. The protein resides in the chloroplast. The catalysed reaction is RNA(n) + a ribonucleoside 5'-triphosphate = RNA(n+1) + diphosphate. DNA-dependent RNA polymerase catalyzes the transcription of DNA into RNA using the four ribonucleoside triphosphates as substrates. This chain is DNA-directed RNA polymerase subunit alpha, found in Populus trichocarpa (Western balsam poplar).